The sequence spans 30 residues: Kalata-B16 (30 aa).

The segment at residues 1 to 30 (GIPCAESCVYIPCTITALLGCKCQDKVCYD) is a cross-link (cyclopeptide (Gly-Asp)). 3 disulfide bridges follow: C4–C21, C8–C23, and C13–C28.

Post-translationally, this is a cyclic peptide.

Its function is as follows. Probably participates in a plant defense mechanism. In Oldenlandia affinis, this protein is Kalata-B16.